Reading from the N-terminus, the 508-residue chain is GMP synthase [glutamine-hydrolyzing] (508 aa).

Positions 1 to 189 (MILVLDFGSQ…ALLVCGCEKT (189 aa)) constitute a Glutamine amidotransferase type-1 domain. C78 (nucleophile) is an active-site residue. Catalysis depends on residues H163 and E165. In terms of domain architecture, GMPS ATP-PPase spans 190–383 (WGMQHFAQKE…LGISQDFLMR (194 aa)). Residue 217–223 (SGGVDST) coordinates ATP.

In terms of assembly, homodimer.

It carries out the reaction XMP + L-glutamine + ATP + H2O = GMP + L-glutamate + AMP + diphosphate + 2 H(+). The protein operates within purine metabolism; GMP biosynthesis; GMP from XMP (L-Gln route): step 1/1. Catalyzes the synthesis of GMP from XMP. The sequence is that of GMP synthase [glutamine-hydrolyzing] from Helicobacter pylori (strain Shi470).